The chain runs to 435 residues: MKTTYVNATIVTMNEQNEVIENGYIIVENDKIIDVNSGEFASDFEVDEVIDMKGKWVLPGLVNTHTHVVMSLLRGIGDDMLLQPWLETRIWPLESQFTSQIAVASTELGLLEMVKSGTTSFSDMFNPIGVDQDAIMETVSRSGMRAAVSRTLFSFGTKEDEKKAIEEAEKYVKRYYNESGMLTTMVAPHSPYTCSTELLEECARIAVENQTMVHIHLSETEREVRDIEAQYGKRPVEYAASCGLFKRSTVIAHGVVLNDNERAFLAEHDVRVAHNPNSNLKLGSGIANVKAMLEAGIKVGIATDSVASNNNLDMFEEMRIATLLQKGIHQDATALPVETALTLATKGAAEVIGMKQTGSLEVGKCADFITIDPSNKPHLQPADEVLSHLVYAASGKDISDVIINGKRVVWNGECKTLDEERIIFEASRYKRGLQR.

Residues His65 and His67 each coordinate Zn(2+). Residues Glu94, Arg150, and His189 each contribute to the substrate site. His216 contributes to the Zn(2+) binding site. Substrate is bound by residues Glu219 and Asp304. Residue Asp304 participates in Zn(2+) binding.

The protein belongs to the metallo-dependent hydrolases superfamily. MTA/SAH deaminase family. The cofactor is Zn(2+).

The enzyme catalyses S-adenosyl-L-homocysteine + H2O + H(+) = S-inosyl-L-homocysteine + NH4(+). The catalysed reaction is S-methyl-5'-thioadenosine + H2O + H(+) = S-methyl-5'-thioinosine + NH4(+). Its function is as follows. Catalyzes the deamination of 5-methylthioadenosine and S-adenosyl-L-homocysteine into 5-methylthioinosine and S-inosyl-L-homocysteine, respectively. Is also able to deaminate adenosine. This is 5-methylthioadenosine/S-adenosylhomocysteine deaminase from Bacillus cereus (strain 03BB102).